A 271-amino-acid polypeptide reads, in one-letter code: ATP synthase subunit a (271 aa).

A run of 5 helical transmembrane segments spans residues 40–60 (TINI…LVLF), 100–120 (LIAP…LMDL), 146–166 (DVNV…FYSI), 220–240 (LIFI…LNVP), and 242–262 (AIFH…LTIV).

Belongs to the ATPase A chain family. As to quaternary structure, F-type ATPases have 2 components, CF(1) - the catalytic core - and CF(0) - the membrane proton channel. CF(1) has five subunits: alpha(3), beta(3), gamma(1), delta(1), epsilon(1). CF(0) has three main subunits: a(1), b(2) and c(9-12). The alpha and beta chains form an alternating ring which encloses part of the gamma chain. CF(1) is attached to CF(0) by a central stalk formed by the gamma and epsilon chains, while a peripheral stalk is formed by the delta and b chains.

The protein localises to the cell inner membrane. Key component of the proton channel; it plays a direct role in the translocation of protons across the membrane. This is ATP synthase subunit a from Escherichia coli O1:K1 / APEC.